A 663-amino-acid chain; its full sequence is DNA ligase (663 aa).

NAD(+) is bound by residues 31–35 (DYEYD), 80–81 (SL), and E109. K111 acts as the N6-AMP-lysine intermediate in catalysis. Residues R132, E167, K283, and K307 each contribute to the NAD(+) site. The Zn(2+) site is built by C401, C404, C419, and C424. The BRCT domain maps to 586–663 (KIDNRFLGKT…TEEDLKDMIK (78 aa)).

The protein belongs to the NAD-dependent DNA ligase family. LigA subfamily. The cofactor is Mg(2+). Mn(2+) is required as a cofactor.

It carries out the reaction NAD(+) + (deoxyribonucleotide)n-3'-hydroxyl + 5'-phospho-(deoxyribonucleotide)m = (deoxyribonucleotide)n+m + AMP + beta-nicotinamide D-nucleotide.. In terms of biological role, DNA ligase that catalyzes the formation of phosphodiester linkages between 5'-phosphoryl and 3'-hydroxyl groups in double-stranded DNA using NAD as a coenzyme and as the energy source for the reaction. It is essential for DNA replication and repair of damaged DNA. This chain is DNA ligase, found in Clostridium kluyveri (strain NBRC 12016).